We begin with the raw amino-acid sequence, 187 residues long: MDNEFEMLKAGKLLIASANLLESNFKRTVLLMCEHNDEGSIGFILNKPMEFKVCEAISGFDEIDEPLHMGGPVQVDTVHFLHTRGDVIDDAQEVLPGLFWGGDKEQLSYLINTGVIRPSEVRFFLGYAGWSAGQLKDEFEEGSWYTADASNEQVFTDEYERMWSRTVRSKGGDYCLVANSPELPGMN.

This sequence belongs to the UPF0301 (AlgH) family.

This Chlorobaculum parvum (strain DSM 263 / NCIMB 8327) (Chlorobium vibrioforme subsp. thiosulfatophilum) protein is UPF0301 protein Cpar_0662.